A 1397-amino-acid chain; its full sequence is ABC transporter B family member 2 (1397 aa).

Residues methionine 1–glycine 117 are disordered. The segment covering isoleucine 24–glutamate 39 has biased composition (acidic residues). The stretch at aspartate 37–asparagine 69 forms a coiled coil. 2 stretches are compositionally biased toward basic and acidic residues: residues asparagine 49 to proline 79 and lysine 107 to glycine 117. Helical transmembrane passes span isoleucine 137–isoleucine 157, phenylalanine 191–leucine 211, phenylalanine 273–alanine 293, glycine 369–tyrosine 389, and tryptophan 407–glycine 427. One can recognise an ABC transmembrane type-1 1 domain in the interval methionine 140 to asparagine 438. Residues isoleucine 474 to arginine 710 enclose the ABC transporter 1 domain. Glycine 509–serine 516 is a binding site for ATP. Disordered stretches follow at residues arginine 710–serine 744 and glycine 763–lysine 783. The span at asparagine 735 to serine 744 shows a compositional bias: low complexity. The next 6 membrane-spanning stretches (helical) occupy residues phenylalanine 801–isoleucine 821, leucine 846–phenylalanine 866, leucine 922–serine 942, leucine 948–phenylalanine 968, glycine 1028–tyrosine 1048, and valine 1101–aspartate 1121. Residues phenylalanine 801–lysine 1124 enclose the ABC transmembrane type-1 2 domain. The region spanning isoleucine 1159–arginine 1395 is the ABC transporter 2 domain. ATP is bound at residue glycine 1194–serine 1201.

It belongs to the ABC transporter superfamily. ABCB family. Multidrug resistance exporter (TC 3.A.1.201) subfamily.

The protein resides in the membrane. In Dictyostelium discoideum (Social amoeba), this protein is ABC transporter B family member 2 (abcB2).